Consider the following 312-residue polypeptide: Malate dehydrogenase (312 aa).

NAD(+) is bound by residues 7-13 and Asp-34; that span reads GAAGGIG. 2 residues coordinate substrate: Arg-81 and Arg-87. NAD(+) contacts are provided by residues Asn-94 and 117–119; that span reads ITN. Residues Asn-119 and Arg-153 each contribute to the substrate site. His-177 serves as the catalytic Proton acceptor. Met-227 lines the NAD(+) pocket.

The protein belongs to the LDH/MDH superfamily. MDH type 1 family. Homodimer.

It carries out the reaction (S)-malate + NAD(+) = oxaloacetate + NADH + H(+). In terms of biological role, catalyzes the reversible oxidation of malate to oxaloacetate. This is Malate dehydrogenase from Escherichia coli (strain SE11).